A 389-amino-acid chain; its full sequence is Probable dual-specificity RNA methyltransferase RlmN (389 aa).

Glu-114 functions as the Proton acceptor in the catalytic mechanism. The 239-residue stretch at 120–358 (QHYGLSVCVT…CVVRQEHGTD (239 aa)) folds into the Radical SAM core domain. Residues Cys-127 and Cys-363 are joined by a disulfide bond. Cys-134, Cys-138, and Cys-141 together coordinate [4Fe-4S] cluster. S-adenosyl-L-methionine contacts are provided by residues 186–187 (GE), Ser-218, 241–243 (SLH), and Asn-319. The active-site S-methylcysteine intermediate is Cys-363. Positions 370–389 (TMKRDRQKAVAEASGKSEGK) are disordered. Over residues 371 to 389 (MKRDRQKAVAEASGKSEGK) the composition is skewed to basic and acidic residues.

It belongs to the radical SAM superfamily. RlmN family. [4Fe-4S] cluster serves as cofactor.

Its subcellular location is the cytoplasm. The enzyme catalyses adenosine(2503) in 23S rRNA + 2 reduced [2Fe-2S]-[ferredoxin] + 2 S-adenosyl-L-methionine = 2-methyladenosine(2503) in 23S rRNA + 5'-deoxyadenosine + L-methionine + 2 oxidized [2Fe-2S]-[ferredoxin] + S-adenosyl-L-homocysteine. It carries out the reaction adenosine(37) in tRNA + 2 reduced [2Fe-2S]-[ferredoxin] + 2 S-adenosyl-L-methionine = 2-methyladenosine(37) in tRNA + 5'-deoxyadenosine + L-methionine + 2 oxidized [2Fe-2S]-[ferredoxin] + S-adenosyl-L-homocysteine. Its function is as follows. Specifically methylates position 2 of adenine 2503 in 23S rRNA and position 2 of adenine 37 in tRNAs. This chain is Probable dual-specificity RNA methyltransferase RlmN, found in Streptococcus thermophilus (strain ATCC BAA-250 / LMG 18311).